The chain runs to 380 residues: Chaperone protein DnaJ (380 aa).

Residues 5-69 (DLYKVLGVEK…QKRAQYDQFG (65 aa)) form the J domain. The CR-type zinc-finger motif lies at 140-222 (GKKTTITYNR…CGGSGHTEQS (83 aa)). Residues Cys-153, Cys-156, Cys-170, Cys-173, Cys-196, Cys-199, Cys-210, and Cys-213 each contribute to the Zn(2+) site. 4 CXXCXGXG motif repeats span residues 153–160 (CETCGGSG), 170–177 (CSKCHGAG), 196–203 (CDVCHGTG), and 210–217 (CATCGGSG).

It belongs to the DnaJ family. As to quaternary structure, homodimer. Requires Zn(2+) as cofactor.

It is found in the cytoplasm. Participates actively in the response to hyperosmotic and heat shock by preventing the aggregation of stress-denatured proteins and by disaggregating proteins, also in an autonomous, DnaK-independent fashion. Unfolded proteins bind initially to DnaJ; upon interaction with the DnaJ-bound protein, DnaK hydrolyzes its bound ATP, resulting in the formation of a stable complex. GrpE releases ADP from DnaK; ATP binding to DnaK triggers the release of the substrate protein, thus completing the reaction cycle. Several rounds of ATP-dependent interactions between DnaJ, DnaK and GrpE are required for fully efficient folding. Also involved, together with DnaK and GrpE, in the DNA replication of plasmids through activation of initiation proteins. The protein is Chaperone protein DnaJ of Lactiplantibacillus plantarum (strain ATCC BAA-793 / NCIMB 8826 / WCFS1) (Lactobacillus plantarum).